We begin with the raw amino-acid sequence, 178 residues long: Caveolin-1 (178 aa).

Residue Ser-2 is modified to N-acetylserine. At Ser-2 the chain carries Phosphoserine. The required for homooligomerization stretch occupies residues 2–94; it reads SGGKYVDSEG…WKASFTTFTV (93 aa). Over 2 to 104 the chain is Cytoplasmic; it reads SGGKYVDSEG…TKYWFYRLLS (103 aa). Position 5 is an N6-acetyllysine; alternate (Lys-5). Lys-5 is covalently cross-linked (Glycyl lysine isopeptide (Lys-Gly) (interchain with G-Cter in ubiquitin); alternate). Tyr-6 carries the post-translational modification Phosphotyrosine. Ser-9 bears the Phosphoserine mark. Tyr-14 is modified (phosphotyrosine; by ABL1). At Tyr-25 the chain carries Phosphotyrosine. Residues Lys-26, Lys-30, Lys-39, Lys-47, and Lys-57 each participate in a glycyl lysine isopeptide (Lys-Gly) (interchain with G-Cter in ubiquitin) cross-link. An interaction with CAVIN3 region spans residues 82–94; it reads DGIWKASFTTFTV. The helical intramembrane region spans 105 to 125; sequence ALFGIPMALIWGIYFAILSFL. Residues 126 to 178 are Cytoplasmic-facing; it reads HIWAVVPCIKSFLIEIQCISRVYSIYVHTFCDPLFEAIGKIFSNIRINMQKEI. An interacts with SPRY1, SPRY2, SPRY3 and SPRY4 region spans residues 131–142; sequence VPCIKSFLIEIQ. 3 S-palmitoyl cysteine lipidation sites follow: Cys-133, Cys-143, and Cys-156. Positions 149-160 are interacts with SPRY1, SPRY2, and SPRY4; sequence SIYVHTFCDPLF. Positions 167 to 178 are interacts with SPRY1, SPRY2, SPRY3 and SPRY4; sequence FSNIRINMQKEI.

It belongs to the caveolin family. In terms of assembly, homooligomer. Interacts with GLIPR2. Interacts with NOSTRIN. Interacts with SNAP25 and STX1A. Interacts (via the N-terminus) with DPP4; the interaction is direct. Interacts with CTNNB1, CDH1 and JUP. Interacts with PACSIN2; this interaction induces membrane tubulation. Interacts with SLC7A9. Interacts with BMX and BTK. Interacts with TGFBR1. Interacts with CAVIN3 (via leucine-zipper domain) in a cholesterol-sensitive manner. Interacts with CAVIN1. Interacts with EHD2 in a cholesterol-dependent manner. Forms a ternary complex with UBXN6 and VCP; mediates CAV1 targeting to lysosomes for degradation. Interacts with ABCG1; this interaction regulates ABCG1-mediated cholesterol efflux. Interacts with NEU3; this interaction enhances NEU3 sialidase activity within caveola. Interacts (via C-terminus) with SPRY1, SPRY2 (via C-terminus), SPRY3, and SPRY4. Interacts with IGFBP5; this interaction allows trafficking of IGFBP5 from the plasma membrane to the nucleus. Phosphorylated at Tyr-14 by ABL1 in response to oxidative stress. Post-translationally, ubiquitinated. Undergo monoubiquitination and multi- and/or polyubiquitination. Monoubiquitination of N-terminal lysines promotes integration in a ternary complex with UBXN6 and VCP which promotes oligomeric CAV1 targeting to lysosomes for degradation. Ubiquitinated by ZNRF1; leading to degradation and modulation of the TLR4-mediated immune response.

The protein resides in the golgi apparatus membrane. The protein localises to the cell membrane. It is found in the membrane. Its subcellular location is the caveola. It localises to the membrane raft. Its function is as follows. May act as a scaffolding protein within caveolar membranes. Forms a stable heterooligomeric complex with CAV2 that targets to lipid rafts and drives caveolae formation. Mediates the recruitment of CAVIN proteins (CAVIN1/2/3/4) to the caveolae. Interacts directly with G-protein alpha subunits and can functionally regulate their activity. Involved in the costimulatory signal essential for T-cell receptor (TCR)-mediated T-cell activation. Its binding to DPP4 induces T-cell proliferation and NF-kappa-B activation in a T-cell receptor/CD3-dependent manner. Recruits CTNNB1 to caveolar membranes and may regulate CTNNB1-mediated signaling through the Wnt pathway. Negatively regulates TGFB1-mediated activation of SMAD2/3 by mediating the internalization of TGFBR1 from membrane rafts leading to its subsequent degradation. Binds 20(S)-hydroxycholesterol (20(S)-OHC). The protein is Caveolin-1 (CAV1) of Muntiacus muntjak (Barking deer).